The following is a 378-amino-acid chain: Interleukin-3 receptor subunit alpha (378 aa).

A signal peptide spans 1–18; the sequence is MVLLWLTLLLIALPCLLQ. Residues 19-305 are Extracellular-facing; that stretch reads TKEDPNPPIT…EEGANTRAWR (287 aa). Asparagine 46, asparagine 64, asparagine 80, and asparagine 109 each carry an N-linked (GlcNAc...) asparagine glycan. 4 disulfide bridges follow: cysteine 52/cysteine 68, cysteine 76/cysteine 195, cysteine 112/cysteine 122, and cysteine 151/cysteine 165. Asparagine 212 and asparagine 218 each carry an N-linked (GlcNAc...) asparagine glycan. Cysteine 217 and cysteine 293 form a disulfide bridge. A WSXWS motif motif is present at residues 282 to 286; sequence LSAWS. Residues 306–325 traverse the membrane as a helical segment; sequence TSLLIALGTLLALVCVFVIC. Over 326 to 378 the chain is Cytoplasmic; it reads RRYLVMQRLFPRIPHMKDPIGDSFQNDKLVVWEAGKAGLEECLVTEVQVVQKT. The short motif at 334–342 is the Box 1 motif element; the sequence is LFPRIPHMK.

Belongs to the type I cytokine receptor family. Type 5 subfamily. As to quaternary structure, interacts with IL3. Heterodimer of an alpha and a beta subunit. The beta subunit is common to the IL3, IL5 and GM-CSF receptors. Post-translationally, ubiquitinated by RNFT2 in response to IL3. Ubiquitination leads ligand-induced degradation by the proteasome. Ubiquitinated by RNF128 via 'Lys-27'-linked polyubiquitination, facilitating its degradation through the lysosomal pathway.

It localises to the cell membrane. Its function is as follows. Cell surface receptor for IL3 expressed on hematopoietic progenitor cells, monocytes and B-lymphocytes that controls the production and differentiation of hematopoietic progenitor cells into lineage-restricted cells. Ligand stimulation rapidly induces hetrodimerization with IL3RB, phosphorylation and enzyme activity of effector proteins such as JAK2 and PI3K that play a role in signaling cell proliferation and differentiation. Activation of JAK2 leads to STAT5-mediated transcriptional program. The protein is Interleukin-3 receptor subunit alpha of Homo sapiens (Human).